The primary structure comprises 378 residues: Cytochrome b (378 aa).

Helical transmembrane passes span 33 to 53 (SGSL…FLSM), 77 to 98 (WLIR…YFHI), 113 to 133 (XNVG…GYVL), and 178 to 198 (FFAF…IHLI). Histidine 83 and histidine 97 together coordinate heme b. Histidine 196 is a heme b binding site. Histidine 201 serves as a coordination point for a ubiquinone. 4 helical membrane-spanning segments follow: residues 226–246 (FKDL…ALFS), 288–308 (LGGV…PILH), 320–340 (LTQF…WIGG), and 347–367 (FIII…VLFP).

The protein belongs to the cytochrome b family. As to quaternary structure, the cytochrome bc1 complex contains 3 respiratory subunits (MT-CYB, CYC1 and UQCRFS1), 2 core proteins (UQCRC1 and UQCRC2) and probably 6 low-molecular weight proteins. Heme b is required as a cofactor.

The protein resides in the mitochondrion inner membrane. Component of the ubiquinol-cytochrome c reductase complex (complex III or cytochrome b-c1 complex) that is part of the mitochondrial respiratory chain. The b-c1 complex mediates electron transfer from ubiquinol to cytochrome c. Contributes to the generation of a proton gradient across the mitochondrial membrane that is then used for ATP synthesis. The polypeptide is Cytochrome b (mt-cyb) (Nannacara anomala (Goldeneye cichlid)).